The primary structure comprises 85 residues: U4-theraphotoxin-Hhn1a (85 aa).

An N-terminal signal peptide occupies residues 1-22 (MKMTLIAILTCAAVLVLHTTAA). The propeptide occupies 23–48 (EELEAESQLMEVGMPDTELAAVDEER). 3 disulfides stabilise this stretch: Cys-52–Cys-66, Cys-56–Cys-77, and Cys-71–Cys-82.

The protein belongs to the neurotoxin 12 (Hwtx-2) family. 02 (Hwtx-2) subfamily. Monomer. Expressed by the venom gland.

The protein resides in the secreted. Functionally, neurotoxin active on both insects and mammals. This Cyriopagopus hainanus (Chinese bird spider) protein is U4-theraphotoxin-Hhn1a.